Reading from the N-terminus, the 73-residue chain is UPF0270 protein PMI2817 (73 aa).

The protein belongs to the UPF0270 family.

The chain is UPF0270 protein PMI2817 from Proteus mirabilis (strain HI4320).